A 76-amino-acid polypeptide reads, in one-letter code: Heat shock factor-binding protein 1 (76 aa).

This sequence belongs to the HSBP1 family. Homohexamer. Associates with heptad repeats of HSF1 trimers and probably also HSF1 monomers, and with HSP70. Association with HSF1 trimers and HSP70 coincides with attenuation of heat shock response and the conversion of HSF1 trimer to monomer.

It is found in the nucleus. Negative regulator of the heat shock response. Negatively affects HSF1 DNA-binding activity. May have a role in the suppression of the activation of the stress response during the aging process. The sequence is that of Heat shock factor-binding protein 1 (HSBP1) from Pongo abelii (Sumatran orangutan).